We begin with the raw amino-acid sequence, 205 residues long: Ribonuclease HII (205 aa).

In terms of domain architecture, RNase H type-2 spans 22 to 205; sequence RFICGVDEAG…RKSFLKNILR (184 aa). The a divalent metal cation site is built by D28, E29, and D120.

Belongs to the RNase HII family. Requires Mn(2+) as cofactor. The cofactor is Mg(2+).

The protein localises to the cytoplasm. It carries out the reaction Endonucleolytic cleavage to 5'-phosphomonoester.. Endonuclease that specifically degrades the RNA of RNA-DNA hybrids. The polypeptide is Ribonuclease HII (Caldicellulosiruptor saccharolyticus (strain ATCC 43494 / DSM 8903 / Tp8T 6331)).